The chain runs to 259 residues: 5'-nucleotidase SurE (259 aa).

The a divalent metal cation site is built by Asp-8, Asp-9, Ser-39, and Asn-93.

It belongs to the SurE nucleotidase family. Requires a divalent metal cation as cofactor.

It is found in the cytoplasm. The catalysed reaction is a ribonucleoside 5'-phosphate + H2O = a ribonucleoside + phosphate. In terms of biological role, nucleotidase that shows phosphatase activity on nucleoside 5'-monophosphates. The chain is 5'-nucleotidase SurE from Thermococcus kodakarensis (strain ATCC BAA-918 / JCM 12380 / KOD1) (Pyrococcus kodakaraensis (strain KOD1)).